The primary structure comprises 1012 residues: Multiple C2 domain and transmembrane region protein 10 (1012 aa).

Residues 1-115 enclose the C2 1 domain; the sequence is MTEAKTGTGN…REGESVVQLY (115 aa). A disordered region spans residues 141–203; it reads ENGENVRRVN…SQQNGQGQRM (63 aa). A compositionally biased stretch (basic residues) spans 148-160; it reads RVNRSGGSKKSKK. 2 stretches are compositionally biased toward low complexity: residues 161 to 180 and 188 to 202; these read VQNVSSSMAIQQQQQQQQQQ and RGNQQQSQQNGQGQR. 3 C2 domains span residues 262–376, 411–551, and 585–710; these read SSHK…PQWY, KAGN…SRWF, and YNSD…THSY. The Ca(2+) site is built by Glu296, Glu344, Asn346, and Glu349. Helical transmembrane passes span 810 to 830, 841 to 861, and 952 to 972; these read FFRLVNVISGLVAVAKLVEVM, VFVLAFLFMVLFPELLLPCLL, and ATFLFLMFCLLAAVGFYTVPV.

This sequence belongs to the MCTP family. The cofactor is Ca(2+). As to expression, highly expressed in roots meristems, shoot apical meristems (SAMs) and in incipient leaf primordia. Observed in flowers.

The protein localises to the endoplasmic reticulum membrane. In terms of biological role, may function as a signaling molecule by regulating the trafficking of other regulators. This Arabidopsis thaliana (Mouse-ear cress) protein is Multiple C2 domain and transmembrane region protein 10.